A 147-amino-acid polypeptide reads, in one-letter code: Phospholipase A2-beta (147 aa).

A signal peptide spans 1–28; that stretch reads MMFRTSLMRFAAAFFAIVFVVLVGVARS. Cystine bridges form between cysteine 31/cysteine 58, cysteine 35/cysteine 64, cysteine 40/cysteine 117, cysteine 51/cysteine 71, cysteine 70/cysteine 95, and cysteine 77/cysteine 88. The Ca(2+) site is built by tyrosine 50, glycine 52, and histidine 55. Residue histidine 74 is part of the active site. Ca(2+) is bound at residue aspartate 75. Positions 144–147 match the Prevents secretion from ER motif; sequence KTEL.

This sequence belongs to the phospholipase A2 family. It depends on Ca(2+) as a cofactor. Ubiquitous but expressed at a low level. Detected in vascular tissues and in the guard cells. Predominantly detected in pollen.

Its subcellular location is the secreted. The protein resides in the endoplasmic reticulum. It catalyses the reaction a 1,2-diacyl-sn-glycero-3-phosphocholine + H2O = a 1-acyl-sn-glycero-3-phosphocholine + a fatty acid + H(+). Inhibited by aristolochic acid. PA2 catalyzes the calcium-dependent hydrolysis of the 2-acyl groups in 3-sn-phosphoglycerides. Releases lysophospholipids (LPLs) and free fatty acids (FFAs) from membrane phospholipids in response to hormones and other external stimuli. Regulates the process of cell elongation and plays important roles in shoot gravitropism by mediating auxin-induced cell elongation. Involved in stomatal opening in response to light. Plays a role in pollen development and germination and tube growth. The sequence is that of Phospholipase A2-beta (PLA2-BETA) from Arabidopsis thaliana (Mouse-ear cress).